Consider the following 227-residue polypeptide: Protein FdhD (227 aa).

210 to 215 (FARNGK) contacts Mo-bis(molybdopterin guanine dinucleotide).

Belongs to the FdhD family.

The protein resides in the cytoplasm. Functionally, required for formate dehydrogenase (FDH) activity. The sequence is that of Protein FdhD from Methanocaldococcus jannaschii (strain ATCC 43067 / DSM 2661 / JAL-1 / JCM 10045 / NBRC 100440) (Methanococcus jannaschii).